The sequence spans 771 residues: UPF0313 protein PSPTO_4928 (771 aa).

The region spanning 371–649 is the Radical SAM core domain; that stretch reads AYDMIRFSVN…KAFLRYHDPK (279 aa). Positions 385, 389, and 392 each coordinate [4Fe-4S] cluster. Residues 683 to 771 form a disordered region; sequence DTYQSARRKN…KPARKPVVPR (89 aa). Basic and acidic residues-rich tracts occupy residues 726–735 and 745–754; these read KPWDKREEAK and AAKERMDAAK. The segment covering 756 to 765 has biased composition (basic residues); sequence GKGKGGKPAR.

This sequence belongs to the UPF0313 family. Requires [4Fe-4S] cluster as cofactor.

The sequence is that of UPF0313 protein PSPTO_4928 from Pseudomonas syringae pv. tomato (strain ATCC BAA-871 / DC3000).